The following is a 486-amino-acid chain: ATP-dependent rRNA helicase rrp3 (486 aa).

Residues 1–60 (MSSVKRRKTDKNPSLEGLKSKKTKESKKESHTPSPEPIEDTEDNRVIEETEEAEEDDAPK) form a disordered region. The Q motif motif lies at 60–88 (KSFKDLGIVDSLCEACDTLGYKAPTPIQR). Positions 91 to 262 (IPLALQGRDL…RASLKDPLRV (172 aa)) constitute a Helicase ATP-binding domain. 104 to 111 (AETGSGKT) contributes to the ATP binding site. The DEAD box motif lies at 210–213 (DEAD). The Helicase C-terminal domain occupies 286 to 434 (HKDTYLIYLL…EYPTVKDEVM (149 aa)). 2 stretches are compositionally biased toward basic and acidic residues: residues 447–460 (ARNEMKNLHEDRGK) and 476–486 (RGRDEMDREEG). Residues 447-486 (ARNEMKNLHEDRGKKGAVLKGRRPANGAKRGRDEMDREEG) are disordered.

This sequence belongs to the DEAD box helicase family. DDX47/RRP3 subfamily. Interacts with the SSU processome.

It is found in the nucleus. The enzyme catalyses ATP + H2O = ADP + phosphate + H(+). ATP-dependent rRNA helicase required for pre-ribosomal RNA processing. Involved in the maturation of the 35S-pre-rRNA and to its cleavage to mature 18S rRNA. The chain is ATP-dependent rRNA helicase rrp3 from Botryotinia fuckeliana (strain B05.10) (Noble rot fungus).